A 437-amino-acid polypeptide reads, in one-letter code: Glutamyl-tRNA reductase (437 aa).

Residues 46 to 49 (TCNR), serine 97, 102 to 104 (EEQ), and glutamine 108 each bind substrate. Residue cysteine 47 is the Nucleophile of the active site. Position 177–182 (177–182 (GAGEMG)) interacts with NADP(+). The disordered stretch occupies residues 410 to 437 (NGRVSEGKDAKVEEGKPEVDVQRSKAES). Residues 414-437 (SEGKDAKVEEGKPEVDVQRSKAES) are compositionally biased toward basic and acidic residues.

It belongs to the glutamyl-tRNA reductase family. In terms of assembly, homodimer.

It carries out the reaction (S)-4-amino-5-oxopentanoate + tRNA(Glu) + NADP(+) = L-glutamyl-tRNA(Glu) + NADPH + H(+). It functions in the pathway porphyrin-containing compound metabolism; protoporphyrin-IX biosynthesis; 5-aminolevulinate from L-glutamyl-tRNA(Glu): step 1/2. In terms of biological role, catalyzes the NADPH-dependent reduction of glutamyl-tRNA(Glu) to glutamate 1-semialdehyde (GSA). The sequence is that of Glutamyl-tRNA reductase from Archaeoglobus fulgidus (strain ATCC 49558 / DSM 4304 / JCM 9628 / NBRC 100126 / VC-16).